Consider the following 246-residue polypeptide: PF03932 family protein CutC (246 aa).

Belongs to the CutC family.

The protein resides in the cytoplasm. The polypeptide is PF03932 family protein CutC (Treponema denticola (strain ATCC 35405 / DSM 14222 / CIP 103919 / JCM 8153 / KCTC 15104)).